The chain runs to 445 residues: UDP-N-acetylmuramoylalanine--D-glutamate ligase (445 aa).

118–124 (GTNGKTT) is an ATP binding site.

This sequence belongs to the MurCDEF family.

It is found in the cytoplasm. The catalysed reaction is UDP-N-acetyl-alpha-D-muramoyl-L-alanine + D-glutamate + ATP = UDP-N-acetyl-alpha-D-muramoyl-L-alanyl-D-glutamate + ADP + phosphate + H(+). The protein operates within cell wall biogenesis; peptidoglycan biosynthesis. Cell wall formation. Catalyzes the addition of glutamate to the nucleotide precursor UDP-N-acetylmuramoyl-L-alanine (UMA). The chain is UDP-N-acetylmuramoylalanine--D-glutamate ligase from Macrococcus caseolyticus (strain JCSC5402) (Macrococcoides caseolyticum).